Here is a 285-residue protein sequence, read N- to C-terminus: 2-oxoglutarate synthase subunit KorB (285 aa).

In terms of assembly, heterotetramer of the KorA, KorB, KorC and KorD subunits.

The enzyme catalyses 2 oxidized [2Fe-2S]-[ferredoxin] + 2-oxoglutarate + CoA = succinyl-CoA + 2 reduced [2Fe-2S]-[ferredoxin] + CO2 + H(+). The polypeptide is 2-oxoglutarate synthase subunit KorB (korB) (Methanothermobacter marburgensis (strain ATCC BAA-927 / DSM 2133 / JCM 14651 / NBRC 100331 / OCM 82 / Marburg) (Methanobacterium thermoautotrophicum)).